A 683-amino-acid polypeptide reads, in one-letter code: Glycine--tRNA ligase beta subunit (683 aa).

This sequence belongs to the class-II aminoacyl-tRNA synthetase family. In terms of assembly, tetramer of two alpha and two beta subunits.

It is found in the cytoplasm. It carries out the reaction tRNA(Gly) + glycine + ATP = glycyl-tRNA(Gly) + AMP + diphosphate. This Pseudomonas putida (strain W619) protein is Glycine--tRNA ligase beta subunit.